The primary structure comprises 321 residues: tRNA-dihydrouridine synthase B (321 aa).

Residues 16-18 (PMA) and Gln70 each bind FMN. Residue Cys100 is the Proton donor of the active site. FMN is bound by residues Lys139, 200 to 202 (NGD), and 224 to 225 (GR).

This sequence belongs to the Dus family. DusB subfamily. It depends on FMN as a cofactor.

It carries out the reaction a 5,6-dihydrouridine in tRNA + NAD(+) = a uridine in tRNA + NADH + H(+). The enzyme catalyses a 5,6-dihydrouridine in tRNA + NADP(+) = a uridine in tRNA + NADPH + H(+). In terms of biological role, catalyzes the synthesis of 5,6-dihydrouridine (D), a modified base found in the D-loop of most tRNAs, via the reduction of the C5-C6 double bond in target uridines. In Shigella flexneri, this protein is tRNA-dihydrouridine synthase B.